A 146-amino-acid polypeptide reads, in one-letter code: Small ribosomal subunit protein uS9z (146 aa).

This sequence belongs to the universal ribosomal protein uS9 family.

The chain is Small ribosomal subunit protein uS9z (RPS16A) from Arabidopsis thaliana (Mouse-ear cress).